The primary structure comprises 353 residues: Protein RecA (353 aa).

65 to 72 (GPESSGKT) serves as a coordination point for ATP.

It belongs to the RecA family.

It localises to the cytoplasm. Can catalyze the hydrolysis of ATP in the presence of single-stranded DNA, the ATP-dependent uptake of single-stranded DNA by duplex DNA, and the ATP-dependent hybridization of homologous single-stranded DNAs. It interacts with LexA causing its activation and leading to its autocatalytic cleavage. The chain is Protein RecA from Aeromonas salmonicida (strain A449).